The primary structure comprises 289 residues: MSAKFPIISITGSSGAGTTTVKDTFEKIFKRENISASFIEGDAFHRFDRETMRSKIAEEKARGVDFTHFSAEANELEILESVFAEYGRRGVGRTRHYVHDEAEAAKFGSDPGTFTDWEEFRDSDLLFYEGLHGCAVTDTVNLAQHCDLKIGVVPVINLEWIQKIHRDKATRGYSTEAVTDTILRRMPDYVNYICPQFSLTDINFQRVPIVDTSNPFIARWIPTPAESILVIRFAKPQSIDFPYLLSMLHNSYMSRANSIVVPGDKLDLAMQLIFTPLIHKLLERKHRMS.

Residue 12-20 (GSSGAGTTT) coordinates ATP.

This sequence belongs to the phosphoribulokinase family.

It carries out the reaction D-ribulose 5-phosphate + ATP = D-ribulose 1,5-bisphosphate + ADP + H(+). Its pathway is carbohydrate biosynthesis; Calvin cycle. The protein is Phosphoribulokinase (cbbP) of Rhizobium meliloti (strain 1021) (Ensifer meliloti).